Here is a 214-residue protein sequence, read N- to C-terminus: Large ribosomal subunit protein uL16-like (214 aa).

It belongs to the universal ribosomal protein uL16 family. As to quaternary structure, component of the 60S large ribosomal subunit (LSU).

The protein resides in the cytoplasm. In terms of biological role, testis-specific component of the ribosome, which is required for the transition from prophase to metaphase in male meiosis I. Compensates for the inactivated X-linked RPL10 paralog during spermatogenesis. The ribosome is a large ribonucleoprotein complex responsible for the synthesis of proteins in the cell. The small ribosomal subunit (SSU) binds messenger RNAs (mRNAs) and translates the encoded message by selecting cognate aminoacyl-transfer RNA (tRNA) molecules. The large subunit (LSU) contains the ribosomal catalytic site termed the peptidyl transferase center (PTC), which catalyzes the formation of peptide bonds, thereby polymerizing the amino acids delivered by tRNAs into a polypeptide chain. The nascent polypeptides leave the ribosome through a tunnel in the LSU and interact with protein factors that function in enzymatic processing, targeting, and the membrane insertion of nascent chains at the exit of the ribosomal tunnel. The sequence is that of Large ribosomal subunit protein uL16-like (RPL10L) from Macaca fascicularis (Crab-eating macaque).